Reading from the N-terminus, the 507-residue chain is Carnosic acid synthase (507 aa).

The helical transmembrane segment at 6 to 23 (VFSLAFLAAWFIVVFPRW) threads the bilayer. A heme-binding site is contributed by Cys450.

Belongs to the cytochrome P450 family. The cofactor is heme. Expressed in glandular trichomes of young leaves.

The protein localises to the membrane. It carries out the reaction 11-hydroxyferruginol + 3 reduced [NADPH--hemoprotein reductase] + 3 O2 = carnosate + 3 oxidized [NADPH--hemoprotein reductase] + 4 H2O + 4 H(+). It catalyses the reaction miltiradiene + 2 reduced [NADPH--hemoprotein reductase] + 2 O2 = miltiradien-20-al + 2 oxidized [NADPH--hemoprotein reductase] + 3 H2O + 2 H(+). The enzyme catalyses ferruginol + 3 reduced [NADPH--hemoprotein reductase] + 3 O2 = pisiferate + 3 oxidized [NADPH--hemoprotein reductase] + 4 H2O + 4 H(+). It functions in the pathway secondary metabolite biosynthesis; terpenoid biosynthesis. Functionally, monooxygenase involved in the biosynthesis of carnosate, a potent antioxidant labdane-related diterpene natural product. Catalyzes the oxidation of 11-hydroxyferruginol to produce carnosate. Mediates the conversion of miltiradien into miltiradien-20-al. Also involved in the production of pisiferic acid and derivative products from ferruginol. The sequence is that of Carnosic acid synthase from Rosmarinus officinalis (Rosemary).